A 691-amino-acid chain; its full sequence is Putative calcium up-regulated protein I (691 aa).

The region spanning 47 to 174 (SNCYLKEKPQ…NYTSQIWTYN (128 aa)) is the Ricin B-type lectin domain.

Belongs to the cup family.

This is Putative calcium up-regulated protein I (cupI) from Dictyostelium discoideum (Social amoeba).